We begin with the raw amino-acid sequence, 434 residues long: Enolase (434 aa).

Residues His158 and Glu167 each coordinate substrate. The active-site Proton donor is the Glu210. Mg(2+)-binding residues include Asp245, Glu294, and Asp319. Residues Glu294 and Asp319 each coordinate substrate. The Proton acceptor role is filled by Lys344. Substrate-binding positions include 371–374 and Lys395; that span reads SHRS.

Belongs to the enolase family. Homodimer. The cofactor is Mg(2+).

It localises to the cytoplasm. The enzyme catalyses (2R)-2-phosphoglycerate = phosphoenolpyruvate + H2O. Its pathway is carbohydrate degradation; glycolysis; pyruvate from D-glyceraldehyde 3-phosphate: step 4/5. The sequence is that of Enolase from Caenorhabditis elegans.